The sequence spans 314 residues: Olfactory receptor 5B12 (314 aa).

Residues 1–23 (MENNTEVTEFILVGLTDDPELQI) lie on the Extracellular side of the membrane. An N-linked (GlcNAc...) asparagine glycan is attached at Asn3. The helical transmembrane segment at 24–44 (PLFIVFLFIYLITLVGNLGMI) threads the bilayer. Residues 45–52 (ELILLDSC) are Cytoplasmic-facing. A helical transmembrane segment spans residues 53–73 (LHTPMYFFLSNLSLVDFGYSS). Residues 74 to 97 (AVTPKVMVGFLTGDKFILYNACAT) are Extracellular-facing. The cysteines at positions 95 and 187 are disulfide-linked. Residues 98–118 (QFFFFVAFITAESFLLASMAY) form a helical membrane-spanning segment. The Cytoplasmic segment spans residues 119–137 (DRYAALCKPLHYTTTMTTN). A helical transmembrane segment spans residues 138–158 (VCACLAIGSYICGFLNASIHT). At 159-194 (GNTFRLSFCRSNVVEHFFCDAPPLLTLSCSDNYISE) the chain is on the extracellular side. Residues 195–215 (MVIFFVVGFNDLFSILVILIS) traverse the membrane as a helical segment. Over 216 to 235 (YLFIFITIMKMRSPEGRQKA) the chain is Cytoplasmic. Residues 236–256 (FSTCASHLTAVSIFYGTGIFM) form a helical membrane-spanning segment. Topologically, residues 257–269 (YLRPNSSHFMGTD) are extracellular. An N-linked (GlcNAc...) asparagine glycan is attached at Asn261. The helical transmembrane segment at 270 to 290 (KMASVFYAIVIPMLNPLVYSL) threads the bilayer. At 291-314 (RNKEVKSAFKKTVGKAKASIGFIF) the chain is on the cytoplasmic side.

The protein belongs to the G-protein coupled receptor 1 family.

It is found in the cell membrane. Odorant receptor. The sequence is that of Olfactory receptor 5B12 (OR5B12) from Homo sapiens (Human).